A 315-amino-acid polypeptide reads, in one-letter code: CRISPR-associated endonuclease Cas1 1 (315 aa).

Mn(2+) is bound by residues Glu-144, His-208, and Glu-223.

This sequence belongs to the CRISPR-associated endonuclease Cas1 family. Homodimer, forms a heterotetramer with a Cas2 homodimer. The cofactor is Mg(2+). Mn(2+) is required as a cofactor.

In terms of biological role, CRISPR (clustered regularly interspaced short palindromic repeat), is an adaptive immune system that provides protection against mobile genetic elements (viruses, transposable elements and conjugative plasmids). CRISPR clusters contain spacers, sequences complementary to antecedent mobile elements, and target invading nucleic acids. CRISPR clusters are transcribed and processed into CRISPR RNA (crRNA). Acts as a dsDNA endonuclease. Involved in the integration of spacer DNA into the CRISPR cassette. The chain is CRISPR-associated endonuclease Cas1 1 from Thermus thermophilus (strain ATCC 27634 / DSM 579 / HB8).